The primary structure comprises 715 residues: MTIPHEGGSTGILVLRDDDHDDVLVLDRLRSDPSIEFVDRFAEQLAGVRRLLPQPDPDLLEEAKRWAYYPWRRMVVAILGLRGFRAVRLDRNRHLITAEEQRALHALRVGVVGLSAGHAIAYTLAAEGACGTLRLADFDKIELSNLNRVPVGVFDIGLNKAMIAARRIAELDPYLAVDLVTSGLSPESVDEFLDGLDVVIEECDSLDIKVILRQAACARGVPVLMATSDRGLVDVERYDVEPGRPIFHGLLGDIDADKLCGLTTKDKVPHVLNILDCQELSARCAASMIEVDQTLWGWPQLAGDIWVGAATVAEAVRRIGLGEPLESGRVRVDVSAALDRLDQPPMPSRGNGWLLESVPPTAPAEPQPTSEIVAQAAIRAPSGGNVQPWHVVAKQHSLTIRLAPEHTSAMDIAFRGSAVAVGAAMFNARVAAAAHRVLGSVEFDESQPDSPLQATMHFGRGDDPSLAALYRPMLLRTTNRHHGMPGHVHPATVELLTNTAAAEGARLQLLLSRNEIDRAATILAAADRIRYLTPRLHEEMMSELRWPGDPSLDAGIDVRSLELDSGELRVLDILRRSDVVARLAQWDCGTALEDNTNERVSASSALAIVYVDGATLTDFARGGSAMQAVWIVAQQHGLAVQPMSPIFLYARGRHDLDQASPHFAAQLHRLQLDFRELVKPGKEGHEVLIFRLFHAPPPSVCSRRRVRHAIPEPHR.

This is an uncharacterized protein from Mycobacterium tuberculosis (strain CDC 1551 / Oshkosh).